A 163-amino-acid polypeptide reads, in one-letter code: Thiol peroxidase (163 aa).

The region spanning 16–162 (LQVGDTAHDF…YDAAIAAVKN (147 aa)) is the Thioredoxin domain. The active-site Cysteine sulfenic acid (-SOH) intermediate is the Cys58. The cysteines at positions 58 and 92 are disulfide-linked.

This sequence belongs to the peroxiredoxin family. Tpx subfamily. As to quaternary structure, homodimer.

The enzyme catalyses a hydroperoxide + [thioredoxin]-dithiol = an alcohol + [thioredoxin]-disulfide + H2O. Functionally, thiol-specific peroxidase that catalyzes the reduction of hydrogen peroxide and organic hydroperoxides to water and alcohols, respectively. Plays a role in cell protection against oxidative stress by detoxifying peroxides. This Streptococcus gordonii protein is Thiol peroxidase.